A 525-amino-acid polypeptide reads, in one-letter code: GMP synthase [glutamine-hydrolyzing] (525 aa).

The Glutamine amidotransferase type-1 domain maps to 9 to 207; that stretch reads RILILDFGSQ…VRDICQCEAL (199 aa). Cys-86 acts as the Nucleophile in catalysis. Residues His-181 and Glu-183 contribute to the active site. Residues 208-400 enclose the GMPS ATP-PPase domain; it reads WTPAKIIDDA…LGLPYDMLYR (193 aa). 235–241 is a binding site for ATP; sequence SGGVDSS.

In terms of assembly, homodimer.

The enzyme catalyses XMP + L-glutamine + ATP + H2O = GMP + L-glutamate + AMP + diphosphate + 2 H(+). Its pathway is purine metabolism; GMP biosynthesis; GMP from XMP (L-Gln route): step 1/1. In terms of biological role, catalyzes the synthesis of GMP from XMP. The sequence is that of GMP synthase [glutamine-hydrolyzing] from Salmonella schwarzengrund (strain CVM19633).